The chain runs to 649 residues: Stress-70 protein, mitochondrial (649 aa).

The transit peptide at 1 to 46 (MISASRAAAARLVGAAASRGPTAARHKDGWNGLSHEAFRIVSRRDY) directs the protein to the mitochondrion. The interval 1 to 432 (MISASRAAAA…IQGGVLAGDV (432 aa)) is interaction with NFS1. 2 residues coordinate ADP: Thr63 and Asn64. Residues 63 to 431 (TNSCVAVMEG…AIQGGVLAGD (369 aa)) form a nucleotide-binding domain (NBD) region. The residue at position 76 (Lys76) is an N6-acetyllysine. Thr87 carries the phosphothreonine modification. N6-acetyllysine; alternate occurs at positions 135 and 138. Residues Lys135 and Lys138 each carry the N6-succinyllysine; alternate modification. Lys143 carries the post-translational modification N6-acetyllysine. Residue Lys206 is modified to N6-acetyllysine; alternate. Lys206 carries the post-translational modification N6-succinyllysine; alternate. Lys206 carries the N6-malonyllysine; alternate modification. N6-acetyllysine occurs at positions 234 and 288. At Lys300 the chain carries N6-acetyllysine; alternate. N6-succinyllysine; alternate is present on Lys300. Residues Glu313, Lys316, and Ser320 each coordinate ADP. N6-succinyllysine is present on Lys368. ADP is bound by residues Gly388 and Arg391. Position 394 is an N6-succinyllysine (Lys394). A Phosphoserine modification is found at Ser408. Residues 432 to 441 (VTDVLLLDVT) are interdomain linker. An N6-acetyllysine; alternate mark is found at Lys565, Lys598, and Lys638. N6-succinyllysine; alternate is present on residues Lys565, Lys598, and Lys638.

This sequence belongs to the heat shock protein 70 family. In terms of assembly, interacts strongly with the intermediate form of FXN and weakly with its mature form. Interacts with HSCB. Associates with the mitochondrial contact site and cristae organizing system (MICOS) complex, composed of at least MICOS10/MIC10, CHCHD3/MIC19, CHCHD6/MIC25, APOOL/MIC27, IMMT/MIC60, APOO/MIC23/MIC26 and QIL1/MIC13. This complex was also known under the names MINOS or MitOS complex. The MICOS complex associates with mitochondrial outer membrane proteins SAMM50, MTX1, MTX2 and DNAJC11, mitochondrial inner membrane protein TMEM11 and with HSPA9. Interacts with DNLZ, the interaction is required to prevent self-aggregation. Interacts with TESPA1. Interacts with PDPN. Interacts with NFU1, NFS1 and ISCU. Interacts with TP53; the interaction promotes TP53 degradation. Interacts (via SBD domain) with UBXN2A; the interaction with UBXN2A inhibits HSPA9/MOT-2 interaction with and degradation of TP53, thereby promotes TP53 translocation to the nucleus. Interacts with ITPR1 AND VDAC1; this interaction couples ITPR1 to VDAC1. Component of the TIM23 mitochondrial inner membrane pre-sequence translocase complex.

It is found in the mitochondrion. The protein resides in the nucleus. The protein localises to the nucleolus. Its subcellular location is the cytoplasm. It localises to the mitochondrion matrix. It carries out the reaction ATP + H2O = ADP + phosphate + H(+). With respect to regulation, the chaperone activity is regulated by ATP-induced allosteric coupling of the nucleotide-binding (NBD) and substrate-binding (SBD) domains. ATP binding in the NBD leads to a conformational change in the NBD, which is transferred through the interdomain linker (IDL) to the substrate-binding domain (SBD). This elicits a reduced substrate affinity and a faster substrate exchange rate. Upon hydrolysis of ATP to ADP, the protein undergoes a conformational change that increases its affinity for substrate proteins. It cycles through repeated phases of ATP hydrolysis and nucleotide exchange, facilitating repeated cycles of substrate binding and release. Functions in collaboration with co-chaperones. Functions with the co-chaperone, DNLZ, to maintain solubility and regulate ATP hydrolysis. Nucleotide exchange factors, GRPEL1 and GRPEL2, accelerate nucleotide exchange. In terms of biological role, mitochondrial chaperone that plays a key role in mitochondrial protein import, folding, and assembly. Plays an essential role in the protein quality control system, the correct folding of proteins, the re-folding of misfolded proteins, and the targeting of proteins for subsequent degradation. These processes are achieved through cycles of ATP binding, ATP hydrolysis, and ADP release, mediated by co-chaperones. In mitochondria, it associates with the TIM (translocase of the inner membrane) protein complex to assist in the import and folding of mitochondrial proteins. Plays an important role in mitochondrial iron-sulfur cluster (ISC) biogenesis, interacts with and stabilizes ISC cluster assembly proteins FXN, NFU1, NFS1 and ISCU. Regulates erythropoiesis via stabilization of ISC assembly. Regulates mitochondrial calcium-dependent apoptosis by coupling two calcium channels, ITPR1 and VDAC1, at the mitochondria-associated endoplasmic reticulum (ER) membrane to facilitate calcium transport from the ER lumen to the mitochondria intermembrane space, providing calcium for the downstream calcium channel MCU, which releases it into the mitochondrial matrix. Although primarily located in the mitochondria, it is also found in other cellular compartments. In the cytosol, it associates with proteins involved in signaling, apoptosis, or senescence. It may play a role in cell cycle regulation via its interaction with and promotion of degradation of TP53. May play a role in the control of cell proliferation and cellular aging. Protects against reactive oxygen species (ROS). Extracellular HSPA9 plays a cytoprotective role by preventing cell lysis following immune attack by the membrane attack complex by disrupting formation of the complex. This chain is Stress-70 protein, mitochondrial, found in Canis lupus familiaris (Dog).